The following is a 207-amino-acid chain: Ribonuclease HII (207 aa).

The RNase H type-2 domain maps to 19–207 (HCIAGVDEVG…PVKKALGIEE (189 aa)). Residues Asp-25, Glu-26, and Asp-117 each contribute to the a divalent metal cation site.

This sequence belongs to the RNase HII family. Requires Mn(2+) as cofactor. The cofactor is Mg(2+).

Its subcellular location is the cytoplasm. It catalyses the reaction Endonucleolytic cleavage to 5'-phosphomonoester.. Functionally, endonuclease that specifically degrades the RNA of RNA-DNA hybrids. The polypeptide is Ribonuclease HII (Vibrio vulnificus (strain CMCP6)).